A 23-amino-acid polypeptide reads, in one-letter code: ALWKDILKNAGKAALNEINQIVQ.

Gln23 carries the post-translational modification Glutamine amide.

As to expression, expressed by the skin glands.

It is found in the secreted. Antimicrobial peptide, active against the Gram-positive bacterium S.aureus, and the Gram-negative bacteria E.coli and P.aeruginosa. Has hemolytic activity (5% hemolysis at 128 ug/ml). The protein is Dermaseptin-4 of Phyllomedusa tarsius (Brownbelly leaf frog).